Here is a 296-residue protein sequence, read N- to C-terminus: MASFPCPIEETLLPVPCKVNLRLAVGARRPNGYHDIDTFFLPLPEPADVLRLRRFDGPGDIDLQCSDPELETDDNLVVRAYRAYAAATGYAPRLEVHLAKHIPHGAGLGGGSSDAAVMLRYLNDRADEAALSPVDLAALALTLGADIPFFLLGVPAVATGVGETLIPADPGLAGWCAVVVCPEARVKTAWAYAALDASRALPQKPGANLLTTAFDANKRAFCVTGAPMRNDFESVVFAAHPELGRVKERLLALGAAGALLSGTGSAVFGLFRKRQTATLALAMLTGSGPRAYLAPL.

Residue K18 is part of the active site. 103–113 serves as a coordination point for ATP; the sequence is PHGAGLGGGSS. D146 is a catalytic residue.

This sequence belongs to the GHMP kinase family. IspE subfamily.

The catalysed reaction is 4-CDP-2-C-methyl-D-erythritol + ATP = 4-CDP-2-C-methyl-D-erythritol 2-phosphate + ADP + H(+). It functions in the pathway isoprenoid biosynthesis; isopentenyl diphosphate biosynthesis via DXP pathway; isopentenyl diphosphate from 1-deoxy-D-xylulose 5-phosphate: step 3/6. Its function is as follows. Catalyzes the phosphorylation of the position 2 hydroxy group of 4-diphosphocytidyl-2C-methyl-D-erythritol. This chain is 4-diphosphocytidyl-2-C-methyl-D-erythritol kinase, found in Solidesulfovibrio magneticus (strain ATCC 700980 / DSM 13731 / RS-1) (Desulfovibrio magneticus).